Consider the following 98-residue polypeptide: NADH-ubiquinone oxidoreductase chain 4L (98 aa).

Transmembrane regions (helical) follow at residues 1 to 21 (MSSY…GILL), 24 to 44 (LHLL…FIWI), and 61 to 81 (LILL…MVAL).

This sequence belongs to the complex I subunit 4L family.

Its subcellular location is the mitochondrion membrane. It carries out the reaction a ubiquinone + NADH + 5 H(+)(in) = a ubiquinol + NAD(+) + 4 H(+)(out). Its function is as follows. Core subunit of the mitochondrial membrane respiratory chain NADH dehydrogenase (Complex I) that is believed to belong to the minimal assembly required for catalysis. Complex I functions in the transfer of electrons from NADH to the respiratory chain. The immediate electron acceptor for the enzyme is believed to be ubiquinone. In Pisaster ochraceus (Ochre sea star), this protein is NADH-ubiquinone oxidoreductase chain 4L (ND4L).